The primary structure comprises 486 residues: Cardiolipin synthase A (486 aa).

Transmembrane regions (helical) follow at residues 3–23 (TFYT…IAGV) and 38–58 (MAWL…YLSV). PLD phosphodiesterase domains follow at residues 219-246 (MDLR…VDPR) and 399-426 (EGGL…DMRS). Residues histidine 224, lysine 226, aspartate 231, histidine 404, lysine 406, and aspartate 411 contribute to the active site.

Belongs to the phospholipase D family. Cardiolipin synthase subfamily. ClsA sub-subfamily.

It localises to the cell inner membrane. It carries out the reaction 2 a 1,2-diacyl-sn-glycero-3-phospho-(1'-sn-glycerol) = a cardiolipin + glycerol. Its function is as follows. Catalyzes the reversible phosphatidyl group transfer from one phosphatidylglycerol molecule to another to form cardiolipin (CL) (diphosphatidylglycerol) and glycerol. The sequence is that of Cardiolipin synthase A from Salmonella choleraesuis (strain SC-B67).